Reading from the N-terminus, the 420-residue chain is Gamma-glutamyl phosphate reductase (420 aa).

The protein belongs to the gamma-glutamyl phosphate reductase family.

Its subcellular location is the cytoplasm. It catalyses the reaction L-glutamate 5-semialdehyde + phosphate + NADP(+) = L-glutamyl 5-phosphate + NADPH + H(+). It functions in the pathway amino-acid biosynthesis; L-proline biosynthesis; L-glutamate 5-semialdehyde from L-glutamate: step 2/2. Its function is as follows. Catalyzes the NADPH-dependent reduction of L-glutamate 5-phosphate into L-glutamate 5-semialdehyde and phosphate. The product spontaneously undergoes cyclization to form 1-pyrroline-5-carboxylate. The protein is Gamma-glutamyl phosphate reductase of Alkalilimnicola ehrlichii (strain ATCC BAA-1101 / DSM 17681 / MLHE-1).